Consider the following 226-residue polypeptide: Exosome complex component Rrp4 (226 aa).

Positions 61-135 constitute an S1 motif domain; the sequence is NDLVIGKVNS…RDPLVSISDR (75 aa). Residues 141-200 form the KH domain; it reads DSGVLMEISPSKVPRLIGKKGSMIQMIEEATDAAVTIGQNGWVVVSCESPEGLLKAKKAI.

It belongs to the RRP4 family. In terms of assembly, component of the archaeal exosome complex. Forms a trimer of Rrp4 and/or Csl4 subunits. The trimer associates with a hexameric ring-like arrangement composed of 3 Rrp41-Rrp42 heterodimers.

It is found in the cytoplasm. In terms of biological role, non-catalytic component of the exosome, which is a complex involved in RNA degradation. Increases the RNA binding and the efficiency of RNA degradation. Confers strong poly(A) specificity to the exosome. This chain is Exosome complex component Rrp4, found in Nitrosopumilus maritimus (strain SCM1).